The sequence spans 144 residues: Translation initiation factor 5A (144 aa).

The residue at position 38 (Lys38) is a Hypusine.

It belongs to the eIF-5A family.

The protein localises to the cytoplasm. Functionally, functions by promoting the formation of the first peptide bond. In Nanoarchaeum equitans (strain Kin4-M), this protein is Translation initiation factor 5A.